A 116-amino-acid chain; its full sequence is Ribulose bisphosphate carboxylase small subunit 1 (116 aa).

Belongs to the RuBisCO small chain family. In terms of assembly, heterohexadecamer of 8 large and 8 small subunits.

Its subcellular location is the cytoplasm. Its function is as follows. RuBisCO catalyzes two reactions: the carboxylation of D-ribulose 1,5-bisphosphate, the primary event in carbon dioxide fixation, as well as the oxidative fragmentation of the pentose substrate. Both reactions occur simultaneously and in competition at the same active site. Although the small subunit is not catalytic it is essential for maximal activity. Can replace the endogenous type I ccbS gene in H.neapolitanus, reconstituting RuBisCO with about 10% of normal activity; the active enzyme is targeted to carboxysomes. This chain is Ribulose bisphosphate carboxylase small subunit 1, found in Hydrogenovibrio crunogenus (strain DSM 25203 / XCL-2) (Thiomicrospira crunogena).